The sequence spans 133 residues: Cytochrome c' (133 aa).

Residues R12, T72, C122, C125, and H126 each contribute to the heme c site.

Binds 1 heme c group covalently per subunit.

Cytochrome c' is the most widely occurring bacterial c-type cytochrome. Cytochromes c' are high-spin proteins and the heme has no sixth ligand. Their exact function is not known. The chain is Cytochrome c' from Rhodocyclus tenuis (Rhodospirillum tenue).